The chain runs to 531 residues: RCC1 and BTB domain-containing protein 1 (531 aa).

6 RCC1 repeats span residues 40-91, 93-145, 147-198, 199-250, 252-302, and 304-356; these read NDEV…LLST, DGVV…ALAA, GEVF…AVLD, NGEV…ALTD, GLLY…AAKT, and GGHV…FLTV. BTB domains are found at residues 370–437 and 470–499; these read ADLK…DLPP and ENAF…INHL.

In terms of tissue distribution, ubiquitously expressed. In the retina, present in the nerve fiber layer and to a lesser extent in the inner and outer plexiform layers (at protein level).

It localises to the nucleus. In terms of biological role, may be involved in cell cycle regulation by chromatin remodeling. This Homo sapiens (Human) protein is RCC1 and BTB domain-containing protein 1 (RCBTB1).